The chain runs to 440 residues: UDP-N-acetylglucosamine 1-carboxyvinyltransferase (440 aa).

22–23 is a binding site for phosphoenolpyruvate; sequence KN. UDP-N-acetyl-alpha-D-glucosamine is bound at residue R102. The Proton donor role is filled by C126. C126 is modified (2-(S-cysteinyl)pyruvic acid O-phosphothioketal). Residues 131–135, D320, and I342 contribute to the UDP-N-acetyl-alpha-D-glucosamine site; that span reads RPVDQ.

The protein belongs to the EPSP synthase family. MurA subfamily.

It is found in the cytoplasm. It carries out the reaction phosphoenolpyruvate + UDP-N-acetyl-alpha-D-glucosamine = UDP-N-acetyl-3-O-(1-carboxyvinyl)-alpha-D-glucosamine + phosphate. The protein operates within cell wall biogenesis; peptidoglycan biosynthesis. Its function is as follows. Cell wall formation. Adds enolpyruvyl to UDP-N-acetylglucosamine. The sequence is that of UDP-N-acetylglucosamine 1-carboxyvinyltransferase from Acidovorax ebreus (strain TPSY) (Diaphorobacter sp. (strain TPSY)).